The primary structure comprises 101 residues: NAD(P)H-quinone oxidoreductase subunit 4L, chloroplastic (101 aa).

3 helical membrane passes run 2–22, 32–52, and 61–81; these read LLEHVLVLSAYLFSIGIYGLI, MCLELILNAVNMNFVTFSDFF, and IFSIFVIAIAAAEAAIGSAIV.

The protein belongs to the complex I subunit 4L family. As to quaternary structure, NDH is composed of at least 16 different subunits, 5 of which are encoded in the nucleus.

It is found in the plastid. The protein localises to the chloroplast thylakoid membrane. It carries out the reaction a plastoquinone + NADH + (n+1) H(+)(in) = a plastoquinol + NAD(+) + n H(+)(out). It catalyses the reaction a plastoquinone + NADPH + (n+1) H(+)(in) = a plastoquinol + NADP(+) + n H(+)(out). NDH shuttles electrons from NAD(P)H:plastoquinone, via FMN and iron-sulfur (Fe-S) centers, to quinones in the photosynthetic chain and possibly in a chloroplast respiratory chain. The immediate electron acceptor for the enzyme in this species is believed to be plastoquinone. Couples the redox reaction to proton translocation, and thus conserves the redox energy in a proton gradient. The sequence is that of NAD(P)H-quinone oxidoreductase subunit 4L, chloroplastic from Carica papaya (Papaya).